The primary structure comprises 394 residues: Ribulose bisphosphate carboxylase large chain (394 aa).

The residue at position 5 (Lys-5) is an N6,N6,N6-trimethyllysine. Residues Asn-114 and Thr-164 each contribute to the substrate site. Lys-166 serves as the catalytic Proton acceptor. Residue Lys-168 participates in substrate binding. Mg(2+) is bound by residues Lys-192, Asp-194, and Glu-195. Position 192 is an N6-carboxylysine (Lys-192). His-285 serves as the catalytic Proton acceptor. Residues Arg-286, His-318, and Ser-370 each coordinate substrate.

The protein belongs to the RuBisCO large chain family. Type I subfamily. Heterohexadecamer of 8 large chains and 8 small chains. It depends on Mg(2+) as a cofactor.

The protein localises to the plastid. It localises to the chloroplast. It carries out the reaction 2 (2R)-3-phosphoglycerate + 2 H(+) = D-ribulose 1,5-bisphosphate + CO2 + H2O. It catalyses the reaction D-ribulose 1,5-bisphosphate + O2 = 2-phosphoglycolate + (2R)-3-phosphoglycerate + 2 H(+). Its function is as follows. RuBisCO catalyzes two reactions: the carboxylation of D-ribulose 1,5-bisphosphate, the primary event in carbon dioxide fixation, as well as the oxidative fragmentation of the pentose substrate in the photorespiration process. Both reactions occur simultaneously and in competition at the same active site. In Victoria cruziana (Santa Cruz water lily), this protein is Ribulose bisphosphate carboxylase large chain (rbcL).